The sequence spans 265 residues: (-)-isopiperitenol/(-)-carveol dehydrogenase, mitochondrial (265 aa).

The transit peptide at 1–30 (MASVKKLAGKVAIVTGGASGIGEVTARLFA) directs the protein to the mitochondrion. 13 to 38 (IVTGGASGIGEVTARLFAERGARAVV) contributes to the NAD(+) binding site. Substrate is bound at residue Ser-147. Tyr-160 acts as the Proton acceptor in catalysis.

It belongs to the short-chain dehydrogenases/reductases (SDR) family. As to quaternary structure, homodimer and homotetramer. In terms of tissue distribution, peltate glandular trichomes.

It is found in the mitochondrion. The catalysed reaction is (1S,6R)-isopiperitenol + NAD(+) = (6R)-isopiperitenone + NADH + H(+). It carries out the reaction (1S,5R)-carveol + NADP(+) = (R)-carvone + NADPH + H(+). Involved in the biosynthesis of menthol and related monoterpenes in leaves. Can use (-)-trans-carveol and, with a lower relative velocity, (-)-trans-isopiperitenol, (+)-neomenthol, (+)-neoisomenthol and (-)-cis-isopiperitenol as substrates, but not (-)-cis-carvenol, (-)-menthol, (+)-isomenthol, 7-hydroxy-limonene, (-)-isopiperitenone or (-)-carvone. This is (-)-isopiperitenol/(-)-carveol dehydrogenase, mitochondrial from Mentha piperita (Peppermint).